Reading from the N-terminus, the 500-residue chain is Beta-glucosidase 28 (500 aa).

A signal peptide spans 1-24 (MDRRLLLSALLFIALACSSNRVHG). Q45 lines the a beta-D-glucoside pocket. N-linked (GlcNAc...) asparagine glycosylation is present at N111. A beta-D-glucoside is bound by residues H146 and 191–192 (NE). Residue E192 is the Proton donor of the active site. Residues C211 and C219 are joined by a disulfide bond. Residue Y337 coordinates a beta-D-glucoside. A glycan (N-linked (GlcNAc...) asparagine) is linked at N362. E408 provides a ligand contact to a beta-D-glucoside. Catalysis depends on E408, which acts as the Nucleophile. N409, N415, and N416 each carry an N-linked (GlcNAc...) asparagine glycan. A beta-D-glucoside-binding positions include W457, 464–465 (EF), and F473.

Belongs to the glycosyl hydrolase 1 family.

It carries out the reaction Hydrolysis of terminal, non-reducing beta-D-glucosyl residues with release of beta-D-glucose.. The sequence is that of Beta-glucosidase 28 (BGLU28) from Oryza sativa subsp. japonica (Rice).